A 77-amino-acid polypeptide reads, in one-letter code: Large ribosomal subunit protein bL28 (77 aa).

This sequence belongs to the bacterial ribosomal protein bL28 family.

This chain is Large ribosomal subunit protein bL28, found in Ralstonia nicotianae (strain ATCC BAA-1114 / GMI1000) (Ralstonia solanacearum).